A 328-amino-acid polypeptide reads, in one-letter code: Interleukin-12 subunit beta (328 aa).

An N-terminal signal peptide occupies residues 1-22; the sequence is MCHQQLVISWFSLVFLASPLMA. The Ig-like C2-type domain occupies 29 to 106; it reads DVYVVELDWY…LSHSLLLLHK (78 aa). The cysteines at positions 50 and 90 are disulfide-linked. Residues N125, N135, N222, and N303 are each glycosylated (N-linked (GlcNAc...) asparagine). In terms of domain architecture, Fibronectin type-III spans 237-328; it reads PPKNLQLKPL…WSEWASVPCS (92 aa).

Belongs to the IL-12B family. Heterodimer with IL12A; disulfide-linked. The heterodimer is known as interleukin IL-12. Heterodimer with IL23A; disulfide-linked. The heterodimer is known as interleukin IL-23. Also secreted as a monomer. Interacts with NBR1; this interaction promotes IL-12 secretion.

It is found in the secreted. Cytokine that can act as a growth factor for activated T and NK cells, enhance the lytic activity of NK/lymphokine-activated killer cells, and stimulate the production of IFN-gamma by resting PBMC. Functionally, associates with IL23A to form the IL-23 interleukin, a heterodimeric cytokine which functions in innate and adaptive immunity. IL-23 may constitute with IL-17 an acute response to infection in peripheral tissues. IL-23 binds to a heterodimeric receptor complex composed of IL12RB1 and IL23R, activates the Jak-Stat signaling cascade, stimulates memory rather than naive T-cells and promotes production of pro-inflammatory cytokines. IL-23 induces autoimmune inflammation and thus may be responsible for autoimmune inflammatory diseases and may be important for tumorigenesis. The sequence is that of Interleukin-12 subunit beta (IL12B) from Papio anubis (Olive baboon).